The chain runs to 420 residues: Tubulin epsilon and delta complex protein 1 (420 aa).

A coiled-coil region spans residues 276 to 340 (SEGGLGELES…AVQQELAALQ (65 aa)). Positions 342 to 351 (SWEQSSTPGQ) are enriched in polar residues. The segment at 342–369 (SWEQSSTPGQPQRPHRLVRSKDGAPRPQ) is disordered. A coiled-coil region spans residues 377–409 (IRTLSAKEACLKKALHQLQRQCQQELARLAGAL).

Interacts with TEDC2. Found in a complex with TEDC1, TEDC2, TUBE1 and TUBD1.

The protein localises to the cell projection. Its subcellular location is the cilium. The protein resides in the cytoplasm. It localises to the cytoskeleton. It is found in the microtubule organizing center. The protein localises to the centrosome. Its subcellular location is the centriole. Functionally, acts as a positive regulator of ciliary hedgehog signaling. Required for centriole stability. May play a role in counteracting perturbation of actin filaments, such as after treatment with the actin depolymerizing microbial metabolite Chivosazole F. The polypeptide is Tubulin epsilon and delta complex protein 1 (Mus musculus (Mouse)).